The primary structure comprises 95 residues: Aspartyl/glutamyl-tRNA(Asn/Gln) amidotransferase subunit C (95 aa).

This sequence belongs to the GatC family. As to quaternary structure, heterotrimer of A, B and C subunits.

It catalyses the reaction L-glutamyl-tRNA(Gln) + L-glutamine + ATP + H2O = L-glutaminyl-tRNA(Gln) + L-glutamate + ADP + phosphate + H(+). The enzyme catalyses L-aspartyl-tRNA(Asn) + L-glutamine + ATP + H2O = L-asparaginyl-tRNA(Asn) + L-glutamate + ADP + phosphate + 2 H(+). Allows the formation of correctly charged Asn-tRNA(Asn) or Gln-tRNA(Gln) through the transamidation of misacylated Asp-tRNA(Asn) or Glu-tRNA(Gln) in organisms which lack either or both of asparaginyl-tRNA or glutaminyl-tRNA synthetases. The reaction takes place in the presence of glutamine and ATP through an activated phospho-Asp-tRNA(Asn) or phospho-Glu-tRNA(Gln). This is Aspartyl/glutamyl-tRNA(Asn/Gln) amidotransferase subunit C from Geotalea daltonii (strain DSM 22248 / JCM 15807 / FRC-32) (Geobacter daltonii).